The chain runs to 463 residues: D(2)-like dopamine receptor (463 aa).

Over 1–35 (MDVFTQYAYNDSIFDNGTWSANETTKDETHPYNYY) the chain is Extracellular. N-linked (GlcNAc...) asparagine glycosylation is found at Asn-10, Asn-16, and Asn-22. Residues 36–58 (AMLLTLLIFVIVFGNVLVCMAVS) traverse the membrane as a helical segment. At 59-68 (REKALQTTTN) the chain is on the cytoplasmic side. Residues 69 to 91 (YLIVSLAVADLLVATLVMPWVVY) form a helical membrane-spanning segment. Residues 92–106 (LEVVGEWRFSKIHCD) are Extracellular-facing. Residues Cys-105 and Cys-183 are joined by a disulfide bond. Residues 107-128 (IFVTLDVMMCTASILNLCAISI) traverse the membrane as a helical segment. The Cytoplasmic portion of the chain corresponds to 129–149 (DRYTAVAMPMLYNTRYSSRRR). The helical transmembrane segment at 150 to 170 (VTVMISVVWVLSFAISCPLLF) threads the bilayer. Residues 171–189 (GLNNTATRDQSLCFIANPA) lie on the Extracellular side of the membrane. Residues 190 to 214 (FVVYSSIVSFYVPFIVTLLVYVQIY) traverse the membrane as a helical segment. Topologically, residues 215–392 (VVLRKRRKRV…SQQKEKKATQ (178 aa)) are cytoplasmic. The tract at residues 295–362 (CGGSHKQPPP…KEAQGNPAPV (68 aa)) is disordered. Over residues 315–329 (PATSHQLLMSTKANA) the composition is skewed to polar residues. The span at 341–353 (EGQRTEKNGDPTK) shows a compositional bias: basic and acidic residues. Residues 393–414 (MLAIVLGVFIICWLPFFITHIL) traverse the membrane as a helical segment. Residues 415-429 (NTHCTRCKVPAEMYN) lie on the Extracellular side of the membrane. Cys-418 and Cys-421 are oxidised to a cystine. A helical membrane pass occupies residues 430–451 (AFTWLGYVNSAVNPIIYTTFNV). Over 452 to 463 (EFRKAFIKILHC) the chain is Cytoplasmic.

Belongs to the G-protein coupled receptor 1 family.

Its subcellular location is the cell membrane. Receptor for dopamine. The sequence is that of D(2)-like dopamine receptor (d215) from Takifugu rubripes (Japanese pufferfish).